A 286-amino-acid chain; its full sequence is Probable aquaporin PIP2-5 (286 aa).

Met-1 carries the N-acetylmethionine modification. Over residues 1–18 (MTKEVVGDKRSFSGKDYQ) the composition is skewed to basic and acidic residues. The segment at 1 to 23 (MTKEVVGDKRSFSGKDYQDPPPE) is disordered. Residues 1–38 (MTKEVVGDKRSFSGKDYQDPPPEPLFDATELGKWSFYR) are Cytoplasmic-facing. The residue at position 3 (Lys-3) is an N6,N6-dimethyllysine. The chain crosses the membrane as a helical span at residues 39-59 (ALIAEFIATLLFLYVTIMTVI). Over 60-75 (GYKSQTDPALNPDQCT) the chain is Extracellular. A helical membrane pass occupies residues 76-96 (GVGVLGIAWAFGGMIFILVYC). Residues 97–124 (TAGISGGHINPAVTFGLLLARKVTLVRA) are Cytoplasmic-facing. An NPA 1 motif is present at residues 106–108 (NPA). The chain crosses the membrane as a helical span at residues 125–145 (VMYMVAQCLGAICGVALVKAF). Residues 146–165 (QSAYFTRYGGGANGLSDGYS) lie on the Extracellular side of the membrane. The chain crosses the membrane as a helical span at residues 166-186 (IGTGVAAEIIGTFVLVYTVFS). The Cytoplasmic segment spans residues 187–200 (ATDPKRSARDSHVP). The chain crosses the membrane as a helical span at residues 201–221 (VLAPLPIGFAVFIVHLATIPI). At 222–248 (TGTGINPARSLGAAIIYNKDKAWDHHW) the chain is on the extracellular side. The short motif at 227 to 229 (NPA) is the NPA 2 element. Residues 249 to 269 (IFWVGPFAGAAIAAFYHQFVL) form a helical membrane-spanning segment. The Cytoplasmic portion of the chain corresponds to 270 to 286 (RAGAIKALGSFRSQPHV). 2 positions are modified to phosphoserine: Ser-279 and Ser-282.

The protein belongs to the MIP/aquaporin (TC 1.A.8) family. PIP (TC 1.A.8.11) subfamily. In terms of tissue distribution, expressed in green siliques.

Its subcellular location is the cell membrane. Aquaporins facilitate the transport of water and small neutral solutes across cell membranes. This Arabidopsis thaliana (Mouse-ear cress) protein is Probable aquaporin PIP2-5 (PIP2-5).